Consider the following 459-residue polypeptide: Flavin-containing monooxygenase FMO GS-OX1 (459 aa).

Position 17–22 (17–22 (GAGAAG)) interacts with FAD. 211-216 (GNYASG) contributes to the NADP(+) binding site.

The protein belongs to the FMO family. The cofactor is FAD. In terms of tissue distribution, mainly expressed in leaves. Low levels in flowers and seeds.

The enzyme catalyses a (Z)-omega-(methylsulfanyl)-N-sulfo-alkylhydroximate S-glucoside + NADPH + O2 + H(+) = a (Z)-omega-(methylsulfinyl)-alkyl-glucosinolate + NADP(+) + H2O. Its function is as follows. Catalyzes the conversion of methylthioalkyl glucosinolates into methylsulfinylalkyl glucosinolates. Able to S-oxygenate both desulfo- and intact 4-methylthiobutyl glucosinolates, but no activity with methionine, dihomomethionine or 5-methylthiopentaldoxime. This is Flavin-containing monooxygenase FMO GS-OX1 (FMOGS-OX1) from Arabidopsis thaliana (Mouse-ear cress).